The following is a 195-amino-acid chain: Sec-independent protein translocase protein TatB (195 aa).

Residues 2-22 (FSNVGWGEVLVLLIVALFLIG) form a helical membrane-spanning segment. Positions 103–125 (VKDTVDTVRKPNLRESLKADKTK) are enriched in basic and acidic residues. A disordered region spans residues 103–195 (VKDTVDTVRK…APGYGWEDVT (93 aa)). Polar residues-rich tracts occupy residues 127 to 139 (SAQP…SGSA) and 146 to 155 (VTQQSNAGES).

It belongs to the TatB family. As to quaternary structure, the Tat system comprises two distinct complexes: a TatABC complex, containing multiple copies of TatA, TatB and TatC subunits, and a separate TatA complex, containing only TatA subunits. Substrates initially bind to the TatABC complex, which probably triggers association of the separate TatA complex to form the active translocon.

Its subcellular location is the cell membrane. Part of the twin-arginine translocation (Tat) system that transports large folded proteins containing a characteristic twin-arginine motif in their signal peptide across membranes. Together with TatC, TatB is part of a receptor directly interacting with Tat signal peptides. TatB may form an oligomeric binding site that transiently accommodates folded Tat precursor proteins before their translocation. The chain is Sec-independent protein translocase protein TatB from Corynebacterium jeikeium (strain K411).